Reading from the N-terminus, the 367-residue chain is Alginate lyase (367 aa).

The first 24 residues, 1–24 (MTLLKRISSPALLALALFGGAAHA), serve as a signal peptide directing secretion. Residues 63–64 (SK), 136–137 (HT), and Tyr254 each bind substrate.

Belongs to the polysaccharide lyase 5 family.

The protein resides in the periplasm. It carries out the reaction Eliminative cleavage of alginate to give oligosaccharides with 4-deoxy-alpha-L-erythro-hex-4-enuronosyl groups at their non-reducing ends and beta-D-mannuronate at their reducing end.. In terms of biological role, catalyzes the depolymerization of alginate by cleaving the beta-1,4 glycosidic bond between two adjacent sugar residues via a beta-elimination mechanism. May serve to degrade mislocalized alginate that is trapped in the periplasmic space. The polypeptide is Alginate lyase (Pseudomonas putida (strain GB-1)).